Consider the following 296-residue polypeptide: Tuberculosinyl adenosine transferase (296 aa).

The protein belongs to the diterpene synthase family. Homodimer. The cofactor is Mg(2+).

The enzyme catalyses tuberculosinyl diphosphate + adenosine + H(+) = 1-tuberculosinyladenosine + diphosphate. It carries out the reaction tuberculosinyl diphosphate + H2O = tuberculosinol + diphosphate. It catalyses the reaction tuberculosinyl diphosphate + H2O = (13R)-edaxadiene + diphosphate. The catalysed reaction is tuberculosinyl diphosphate + H2O = (13S)-edaxadiene + diphosphate. In terms of biological role, tuberculosinyl transferase that catalyzes the condensation of adenosine and tuberculosinyl diphosphate (TbPP) to generate 1-tuberculosinyladenosine (1-TbAd), which acts as an antiacid that directly protects M.tuberculosis from acid pH and physically remodels M.tuberculosis phagolysosomes. In addition, acts as a phosphatase that catalyzes the diphosphate-removal from TbPP to produce both tuberculosinol (TOH) and isotuberculosinol (iso-TOH). This is Tuberculosinyl adenosine transferase from Mycobacterium tuberculosis (strain CDC 1551 / Oshkosh).